Consider the following 87-residue polypeptide: Small ribosomal subunit protein uS15 (87 aa).

Positions 1–19 (MEKARKEQLIREYATHEGD) are enriched in basic and acidic residues. Residues 1–22 (MEKARKEQLIREYATHEGDTGS) form a disordered region.

It belongs to the universal ribosomal protein uS15 family. Part of the 30S ribosomal subunit. Forms a bridge to the 50S subunit in the 70S ribosome, contacting the 23S rRNA.

Functionally, one of the primary rRNA binding proteins, it binds directly to 16S rRNA where it helps nucleate assembly of the platform of the 30S subunit by binding and bridging several RNA helices of the 16S rRNA. Its function is as follows. Forms an intersubunit bridge (bridge B4) with the 23S rRNA of the 50S subunit in the ribosome. This is Small ribosomal subunit protein uS15 from Clostridium novyi (strain NT).